The following is a 237-amino-acid chain: Cell division cycle-associated protein 4 (237 aa).

The region spanning 26–73 (YSLQRQSLLDMSLVKLQLCHMLVEPNLCRSVLIANTVRQIQEEMSQDG) is the SERTA domain.

In terms of tissue distribution, expressed preferentially in hematopoietic progenitors and mature blood cells. Expressed at low levels in the heart, lung, spleen, and thymus and at a higher level in muscle.

The protein localises to the nucleus. In terms of biological role, may participate in the regulation of cell proliferation through the E2F/RB pathway. May be involved in molecular regulation of hematopoietic stem cells and progenitor cell lineage commitment and differentiation. In Mus musculus (Mouse), this protein is Cell division cycle-associated protein 4 (Cdca4).